Reading from the N-terminus, the 96-residue chain is Cathelin (96 aa).

Gln-1 is modified (pyrrolidone carboxylic acid). Residues 31–50 (DQPPKADEDPGTPKPVSFTV) form a disordered region. Disulfide bonds link Cys-55-Cys-66 and Cys-73-Cys-90.

The protein belongs to the cathelicidin family.

It is found in the secreted. In terms of biological role, probably a microbicidal peptide. The chain is Cathelin from Sus scrofa (Pig).